Reading from the N-terminus, the 551-residue chain is Dihydroxy-acid dehydratase (551 aa).

Residue Asp-78 participates in Mg(2+) binding. Residue Cys-119 coordinates [2Fe-2S] cluster. Mg(2+)-binding residues include Asp-120 and Lys-121. N6-carboxylysine is present on Lys-121. Position 191 (Cys-191) interacts with [2Fe-2S] cluster. Mg(2+) is bound at residue Glu-442. The Proton acceptor role is filled by Ser-468.

This sequence belongs to the IlvD/Edd family. In terms of assembly, homodimer. It depends on [2Fe-2S] cluster as a cofactor. Requires Mg(2+) as cofactor.

The enzyme catalyses (2R)-2,3-dihydroxy-3-methylbutanoate = 3-methyl-2-oxobutanoate + H2O. It catalyses the reaction (2R,3R)-2,3-dihydroxy-3-methylpentanoate = (S)-3-methyl-2-oxopentanoate + H2O. Its pathway is amino-acid biosynthesis; L-isoleucine biosynthesis; L-isoleucine from 2-oxobutanoate: step 3/4. It participates in amino-acid biosynthesis; L-valine biosynthesis; L-valine from pyruvate: step 3/4. Functions in the biosynthesis of branched-chain amino acids. Catalyzes the dehydration of (2R,3R)-2,3-dihydroxy-3-methylpentanoate (2,3-dihydroxy-3-methylvalerate) into 2-oxo-3-methylpentanoate (2-oxo-3-methylvalerate) and of (2R)-2,3-dihydroxy-3-methylbutanoate (2,3-dihydroxyisovalerate) into 2-oxo-3-methylbutanoate (2-oxoisovalerate), the penultimate precursor to L-isoleucine and L-valine, respectively. This Halothermothrix orenii (strain H 168 / OCM 544 / DSM 9562) protein is Dihydroxy-acid dehydratase.